Consider the following 415-residue polypeptide: Multidrug resistance protein MdtA (415 aa).

An N-terminal signal peptide occupies residues methionine 1–alanine 21. The segment covering aspartate 31 to serine 46 has biased composition (polar residues). Disordered stretches follow at residues aspartate 31–alanine 56 and valine 391–serine 415. Positions proline 399–serine 415 are enriched in basic and acidic residues.

Belongs to the membrane fusion protein (MFP) (TC 8.A.1) family. In terms of assembly, part of a tripartite efflux system composed of MdtA, MdtB and MdtC.

It localises to the cell inner membrane. Its function is as follows. The MdtABC tripartite complex confers resistance against novobiocin and deoxycholate. This chain is Multidrug resistance protein MdtA, found in Escherichia coli O45:K1 (strain S88 / ExPEC).